A 302-amino-acid chain; its full sequence is Ribosomal RNA small subunit methyltransferase A (302 aa).

Residues Asn27, Leu29, Gly54, Glu75, Asp100, and Asn138 each coordinate S-adenosyl-L-methionine.

The protein belongs to the class I-like SAM-binding methyltransferase superfamily. rRNA adenine N(6)-methyltransferase family. RsmA subfamily.

It localises to the cytoplasm. It catalyses the reaction adenosine(1518)/adenosine(1519) in 16S rRNA + 4 S-adenosyl-L-methionine = N(6)-dimethyladenosine(1518)/N(6)-dimethyladenosine(1519) in 16S rRNA + 4 S-adenosyl-L-homocysteine + 4 H(+). Its function is as follows. Specifically dimethylates two adjacent adenosines (A1518 and A1519) in the loop of a conserved hairpin near the 3'-end of 16S rRNA in the 30S particle. May play a critical role in biogenesis of 30S subunits. The polypeptide is Ribosomal RNA small subunit methyltransferase A (Natranaerobius thermophilus (strain ATCC BAA-1301 / DSM 18059 / JW/NM-WN-LF)).